The following is a 115-amino-acid chain: MSYKPNLAAHMPAAALNAAGSVHSPSTSMATSSQYRQLLSDYGPPSLGYTQGTGNSQVPQSKYAELLAIIEELGKEIRPTYAGSKSAMERLKRGIIHARGLVRECLAETERNARS.

The interval 20–25 (GSVHSP) is interaction with CDK2AP2. Serine 46 carries the post-translational modification Phosphoserine; by IKKE.

Belongs to the CDK2AP family. Homodimer. Component of the nucleosome remodeling and deacetylase (NuRD) repressor complex, composed of core proteins MTA1, MTA2, MTA3, RBBP4, RBBP7, HDAC1, HDAC2, MBD2, MBD3, and peripherally associated proteins CDK2AP1, CDK2AP2, GATAD2A, GATAD2B, CHD3, CHD4 and CHD5. The exact stoichiometry of the NuRD complex is unknown, and some subunits such as MBD2 and MBD3, GATAD2A and GATAD2B, and CHD3, CHD4 and CHD5 define mutually exclusive NuRD complexes. Interacts with monomeric unphosphorylated CDK2. Interacts with CDK2AP2. Interacts with GATAD2A. Interacts with HDAC1. Interacts with HDAC2. Interacts with MBD2. Interacts with MBD3. Interacts with RBBP4. Interacts with RBBP7. Phosphorylated in vitro by IKBKE at Ser-46.

The protein localises to the nucleus. Its subcellular location is the chromosome. In terms of biological role, inhibitor of cyclin-dependent kinase CDK2. Also acts as a component of the histone deacetylase NuRD complex which participates in the remodeling of chromatin. The protein is Cyclin-dependent kinase 2-associated protein 1 (CDK2AP1) of Homo sapiens (Human).